Consider the following 545-residue polypeptide: Chaperonin GroEL (545 aa).

ATP is bound by residues 29 to 32, Lys-50, 86 to 90, Gly-414, 477 to 479, and Asp-493; these read TMGP, DGTTT, and NAA.

Belongs to the chaperonin (HSP60) family. In terms of assembly, forms a cylinder of 14 subunits composed of two heptameric rings stacked back-to-back. Interacts with the co-chaperonin GroES.

It localises to the cytoplasm. The catalysed reaction is ATP + H2O + a folded polypeptide = ADP + phosphate + an unfolded polypeptide.. Its function is as follows. Together with its co-chaperonin GroES, plays an essential role in assisting protein folding. The GroEL-GroES system forms a nano-cage that allows encapsulation of the non-native substrate proteins and provides a physical environment optimized to promote and accelerate protein folding. The polypeptide is Chaperonin GroEL (Campylobacter fetus subsp. fetus (strain 82-40)).